The sequence spans 364 residues: Fructose-bisphosphate aldolase A (364 aa).

At tyrosine 5 the chain carries Phosphotyrosine. Threonine 9 is subject to Phosphothreonine. Residues serine 36 and serine 39 each carry the phosphoserine modification. Position 42 is an N6-acetyllysine; alternate (lysine 42). Lysine 42 participates in a covalent cross-link: Glycyl lysine isopeptide (Lys-Gly) (interchain with G-Cter in SUMO1); alternate. Residue lysine 42 forms a Glycyl lysine isopeptide (Lys-Gly) (interchain with G-Cter in SUMO2); alternate linkage. Residue arginine 43 coordinates beta-D-fructose 1,6-bisphosphate. Serine 46 is modified (phosphoserine). Lysine 99 is subject to N6-(2-hydroxyisobutyryl)lysine. Lysine 108 carries the N6-acetyllysine modification. Lysine 111 carries the N6-acetyllysine; alternate modification. Lysine 111 is modified (N6-malonyllysine; alternate). The residue at position 132 (serine 132) is a Phosphoserine. Position 147 is an N6-(2-hydroxyisobutyryl)lysine (lysine 147). Glutamate 188 acts as the Proton acceptor in catalysis. The active-site Schiff-base intermediate with dihydroxyacetone-P is the lysine 230. Phosphoserine is present on serine 272. Beta-D-fructose 1,6-bisphosphate contacts are provided by residues 272–274 (SGG), serine 301, and arginine 304. At lysine 312 the chain carries N6-malonyllysine. Lysine 330 is subject to N6-acetyllysine.

Belongs to the class I fructose-bisphosphate aldolase family. Homotetramer. Interacts with SNX9 and WAS. Interacts with FBP2; the interaction blocks FBP2 inhibition by physiological concentrations of AMP and reduces inhibition by Ca(2+).

It is found in the cytoplasm. It localises to the myofibril. The protein resides in the sarcomere. Its subcellular location is the i band. The protein localises to the m line. It carries out the reaction beta-D-fructose 1,6-bisphosphate = D-glyceraldehyde 3-phosphate + dihydroxyacetone phosphate. It functions in the pathway carbohydrate degradation; glycolysis; D-glyceraldehyde 3-phosphate and glycerone phosphate from D-glucose: step 4/4. Its function is as follows. Catalyzes the reversible conversion of beta-D-fructose 1,6-bisphosphate (FBP) into two triose phosphate and plays a key role in glycolysis and gluconeogenesis. In addition, may also function as scaffolding protein. This is Fructose-bisphosphate aldolase A (Aldoa) from Mus musculus (Mouse).